We begin with the raw amino-acid sequence, 188 residues long: dCTP deaminase (188 aa).

DCTP-binding positions include 111–116 (KSTYAR), 135–137 (TLE), Q156, Y170, and Q180. The active-site Proton donor/acceptor is the E137.

Belongs to the dCTP deaminase family. Homotrimer.

The catalysed reaction is dCTP + H2O + H(+) = dUTP + NH4(+). It participates in pyrimidine metabolism; dUMP biosynthesis; dUMP from dCTP (dUTP route): step 1/2. Functionally, catalyzes the deamination of dCTP to dUTP. This is dCTP deaminase from Acidovorax sp. (strain JS42).